We begin with the raw amino-acid sequence, 782 residues long: Glucocorticoid receptor (782 aa).

The segment at 1-20 is disordered; that stretch reads MDPKESLTPPSREEIPSSVL. The tract at residues 1 to 425 is modulating; that stretch reads MDPKESLTPP…SAATGPPPKL (425 aa). Thr-8 is subject to Phosphothreonine. Arg-24 is modified (omega-N-methylarginine). The residue at position 46 (Ser-46) is a Phosphoserine. Residues 48 to 79 form a disordered region; the sequence is SLAAVSQPDSKQQRLAVDFPKGSGSNAQQPDL. Ser-114, Ser-135, Ser-142, Ser-208, Ser-216, and Ser-231 each carry phosphoserine. The interval 130–184 is disordered; the sequence is LSRSTSVPENPKSSASAAGPAAPAEKAFPKTHSDGAPEQPNVKGQTGTNGGNVKL. Positions 140–155 are enriched in low complexity; the sequence is PKSSASAAGPAAPAEK. Residue Lys-263 forms a Glycyl lysine isopeptide (Lys-Gly) (interchain with G-Cter in SUMO2) linkage. Ser-272 bears the Phosphoserine mark. Glycyl lysine isopeptide (Lys-Gly) (interchain with G-Cter in SUMO); alternate cross-links involve residues Lys-282 and Lys-298. Residues Lys-282 and Lys-298 each participate in a glycyl lysine isopeptide (Lys-Gly) (interchain with G-Cter in SUMO2); alternate cross-link. 2 positions are modified to phosphoserine: Ser-312 and Ser-410. A Glycyl lysine isopeptide (Lys-Gly) (interchain with G-Cter in ubiquitin) cross-link involves residue Lys-424. NR C4-type zinc fingers lie at residues 426–446 and 462–486; these read CLVC…CGSC and CAGR…YRKC. Residues 426–491 constitute a DNA-binding region (nuclear receptor); that stretch reads CLVCSDEASG…RYRKCLQAGM (66 aa). An N6-acetyllysine mark is found at Lys-485, Lys-497, Lys-499, and Lys-500. An interaction with CLOCK region spans residues 490-782; sequence GMNLEARKTK…NIKKLLFHQK (293 aa). A hinge region spans residues 492–528; that stretch reads NLEARKTKKKIKGIQQATTGVSQETSENSANKTIVPA. Residues 529–763 form the NR LBD domain; the sequence is TLPQLTPTLV…FPEMLAEIIT (235 aa). Residues 537-702 are interaction with CRY1; sequence LVSLLEVIEP…EIRMTYIKEL (166 aa). Residue Lys-708 forms a Glycyl lysine isopeptide (Lys-Gly) (interchain with G-Cter in SUMO) linkage.

The protein belongs to the nuclear hormone receptor family. NR3 subfamily. As to quaternary structure, heteromultimeric cytoplasmic complex with HSP90AA1, HSPA1A/HSPA1B, and FKBP5 or another immunophilin such as PPID, STIP1, or the immunophilin homolog PPP5C. Upon ligand binding FKBP5 dissociates from the complex and FKBP4 takes its place, thereby linking the complex to dynein and mediating transport to the nucleus, where the complex dissociates. Probably forms a complex composed of chaperones HSP90 and HSP70, co-chaperones CDC37, PPP5C, TSC1 and client protein TSC2, CDK4, AKT, RAF1 and NR3C1; this complex does not contain co-chaperones STIP1/HOP and PTGES3/p23. Directly interacts with UNC45A. Binds to DNA as a homodimer, and as heterodimer with NR3C2 or the retinoid X receptor. Binds STAT5A and STAT5B homodimers and heterodimers. Interacts with NRIP1, POU2F1, POU2F2 and TRIM28. Interacts with several coactivator complexes, including the SMARCA4 complex, CREBBP/EP300, TADA2L (Ada complex) and p160 coactivators such as NCOA2 and NCOA6. Interaction with BAG1 inhibits transactivation. Interacts with HEXIM1 and TGFB1I1. Interacts with NCOA1. Interacts with NCOA3, SMARCA4, SMARCC1, SMARCD1, and SMARCE1. Interacts with CLOCK, CRY1 and CRY2 in a ligand-dependent fashion. Interacts with CIART. Interacts with RWDD3. Interacts with UBE2I/UBC9 and this interaction is enhanced in the presence of RWDD3. Interacts with GRIP1. Interacts with NR4A3 (via nuclear receptor DNA-binding domain), represses transcription activity of NR4A3 on the POMC promoter Nur response element (NurRE). Directly interacts with PNRC2 to attract and form a complex with UPF1 and DCP1A; the interaction leads to rapid mRNA degradation. Interacts with GSK3B. Interacts with FNIP1 and FNIP2. Interacts (via C-terminus) with HNRNPU (via C-terminus). Interacts with MCM3AP. Interacts (via domain NR LBD) with HSP90AA1 and HSP90AB1. In the absence of hormonal ligand, interacts with TACC1. Interacts (via NR LBD domain) with ZNF764 (via KRAB domain); the interaction regulates transcription factor activity of NR3C1 by directing its actions toward certain biologic pathways. Acetylation by CLOCK reduces its binding to glucocorticoid response elements and its transcriptional activity. Post-translationally, increased proteasome-mediated degradation in response to glucocorticoids. In terms of processing, phosphorylated in the absence of hormone; becomes hyperphosphorylated in the presence of glucocorticoid. The Ser-208, Ser-231 and Ser-410-phosphorylated forms are mainly cytoplasmic, and the Ser-216-phosphorylated form is nuclear. Phosphorylation at Ser-216 increases transcriptional activity. Phosphorylation at Ser-208, Ser-231 and Ser-410 decreases signaling capacity. Phosphorylation at Ser-410 may protect from glucocorticoid-induced apoptosis. Phosphorylation at Ser-208 and Ser-216 is not required in regulation of chromosome segregation. May be dephosphorylated by PPP5C, attenuates NR3C1 action. Ubiquitinated by UBR5, leading to its degradation: UBR5 specifically recognizes and binds ligand-bound NR3C1 when it is not associated with coactivators (NCOAs). In presence of NCOAs, the UBR5-degron is not accessible, preventing its ubiquitination and degradation. Post-translationally, sumoylation at Lys-282 and Lys-298 negatively regulates its transcriptional activity. Sumoylation at Lys-708 positively regulates its transcriptional activity in the presence of RWDD3. Sumoylation at Lys-282 and Lys-298 is dispensable whereas sumoylation at Lys-708 is critical for the stimulatory effect of RWDD3 on its transcriptional activity. Heat shock increases sumoylation in a RWDD3-dependent manner.

Its subcellular location is the cytoplasm. It localises to the nucleus. The protein resides in the mitochondrion. It is found in the cytoskeleton. The protein localises to the spindle. Its subcellular location is the microtubule organizing center. It localises to the centrosome. The protein resides in the chromosome. It is found in the nucleoplasm. Its function is as follows. Receptor for glucocorticoids (GC). Has a dual mode of action: as a transcription factor that binds to glucocorticoid response elements (GRE), both for nuclear and mitochondrial DNA, and as a modulator of other transcription factors. Affects inflammatory responses, cellular proliferation and differentiation in target tissues. Involved in chromatin remodeling. Plays a role in rapid mRNA degradation by binding to the 5' UTR of target mRNAs and interacting with PNRC2 in a ligand-dependent manner which recruits the RNA helicase UPF1 and the mRNA-decapping enzyme DCP1A, leading to RNA decay. Could act as a coactivator for STAT5-dependent transcription upon growth hormone (GH) stimulation and could reveal an essential role of hepatic GR in the control of body growth. Mediates glucocorticoid-induced apoptosis. Promotes accurate chromosome segregation during mitosis. May act as a tumor suppressor. May play a negative role in adipogenesis through the regulation of lipolytic and antilipogenic gene expression. The sequence is that of Glucocorticoid receptor (NR3C1) from Sus scrofa (Pig).